Consider the following 689-residue polypeptide: Glycine--tRNA ligase beta subunit (689 aa).

The protein belongs to the class-II aminoacyl-tRNA synthetase family. As to quaternary structure, tetramer of two alpha and two beta subunits.

Its subcellular location is the cytoplasm. The catalysed reaction is tRNA(Gly) + glycine + ATP = glycyl-tRNA(Gly) + AMP + diphosphate. The chain is Glycine--tRNA ligase beta subunit from Acinetobacter baumannii (strain ATCC 17978 / DSM 105126 / CIP 53.77 / LMG 1025 / NCDC KC755 / 5377).